The sequence spans 1373 residues: DNA-directed RNA polymerase subunit beta (1373 aa).

It belongs to the RNA polymerase beta chain family. In terms of assembly, the RNAP catalytic core consists of 2 alpha, 1 beta, 1 beta' and 1 omega subunit. When a sigma factor is associated with the core the holoenzyme is formed, which can initiate transcription.

It catalyses the reaction RNA(n) + a ribonucleoside 5'-triphosphate = RNA(n+1) + diphosphate. Functionally, DNA-dependent RNA polymerase catalyzes the transcription of DNA into RNA using the four ribonucleoside triphosphates as substrates. This Rickettsia canadensis (strain McKiel) protein is DNA-directed RNA polymerase subunit beta.